The primary structure comprises 265 residues: ATP synthase subunit a (265 aa).

The next 6 membrane-spanning stretches (helical) occupy residues 26 to 46, 88 to 108, 132 to 152, 168 to 188, 195 to 217, and 231 to 251; these read VHLDTLFFSLVSGVLFLFFFY, IGSLALTIFCWVFIMNAIDLI, DISATLGMSVCVFALIIFYTI, PFNHWAFIPVNFLLEAVTLLA, FRLFGNMYAGELIFVLIAVMYMA, and LIWAIFHILVITLQAFIFMML.

This sequence belongs to the ATPase A chain family. As to quaternary structure, F-type ATPases have 2 components, CF(1) - the catalytic core - and CF(0) - the membrane proton channel. CF(1) has five subunits: alpha(3), beta(3), gamma(1), delta(1), epsilon(1). CF(0) has three main subunits: a(1), b(2) and c(9-12). The alpha and beta chains form an alternating ring which encloses part of the gamma chain. CF(1) is attached to CF(0) by a central stalk formed by the gamma and epsilon chains, while a peripheral stalk is formed by the delta and b chains.

The protein localises to the cell inner membrane. Functionally, key component of the proton channel; it plays a direct role in the translocation of protons across the membrane. The polypeptide is ATP synthase subunit a (Histophilus somni (strain 2336) (Haemophilus somnus)).